We begin with the raw amino-acid sequence, 159 residues long: MMIKIISVGKLKQKAFVDLINDYLKRINHYLKCQEIVVSDEPEPVQISNKSLEQIKSKEASKIFKNINQNDFVIALIIESNIISSETLAKKIQQWLNTFSHDICFIIGGSNGLHESIYERANYHLSMSKMTFAHGLAKVMLCEQIYRALSILNNGKYHK.

Residues Leu-76, Gly-108, and 127-132 each bind S-adenosyl-L-methionine; that span reads MSKMTF.

Belongs to the RNA methyltransferase RlmH family. In terms of assembly, homodimer.

Its subcellular location is the cytoplasm. It catalyses the reaction pseudouridine(1915) in 23S rRNA + S-adenosyl-L-methionine = N(3)-methylpseudouridine(1915) in 23S rRNA + S-adenosyl-L-homocysteine + H(+). Functionally, specifically methylates the pseudouridine at position 1915 (m3Psi1915) in 23S rRNA. The polypeptide is Ribosomal RNA large subunit methyltransferase H (Ureaplasma parvum serovar 3 (strain ATCC 27815 / 27 / NCTC 11736)).